We begin with the raw amino-acid sequence, 230 residues long: Large ribosomal subunit protein uL4 (230 aa).

The segment at 59–113 (RQGTHATKTRGEVSGGGKKPYRQKGTGRARQGSTRAPQFTGGGTVHGPQPRDYSQ) is disordered.

This sequence belongs to the universal ribosomal protein uL4 family. As to quaternary structure, part of the 50S ribosomal subunit.

Functionally, one of the primary rRNA binding proteins, this protein initially binds near the 5'-end of the 23S rRNA. It is important during the early stages of 50S assembly. It makes multiple contacts with different domains of the 23S rRNA in the assembled 50S subunit and ribosome. In terms of biological role, forms part of the polypeptide exit tunnel. In Nocardia farcinica (strain IFM 10152), this protein is Large ribosomal subunit protein uL4.